The chain runs to 181 residues: Ribulose bisphosphate carboxylase small subunit, chloroplastic 1 (181 aa).

The N-terminal 57 residues, 1–57 (MASSIVSSAAAATRSNVAQASMVAPFTGLKSAASFPVTKKNNNVDITSLASNGGRVR), are a transit peptide targeting the chloroplast.

It belongs to the RuBisCO small chain family. In terms of assembly, (Microbial infection) Binds to tobamovirus movement protein; this interaction seems required for viral systemic movement. As to quaternary structure, heterohexadecamer of 8 large and 8 small subunits.

It localises to the plastid. The protein resides in the chloroplast. It is found in the cell junction. Its subcellular location is the plasmodesma. Its function is as follows. RuBisCO catalyzes two reactions: the carboxylation of D-ribulose 1,5-bisphosphate, the primary event in carbon dioxide fixation, as well as the oxidative fragmentation of the pentose substrate. Both reactions occur simultaneously and in competition at the same active site. Although the small subunit is not catalytic it is essential for maximal activity. Involved in antiviral defenses. In Solanum lycopersicum (Tomato), this protein is Ribulose bisphosphate carboxylase small subunit, chloroplastic 1.